The primary structure comprises 233 residues: MAHGRNIRKRTFSDMDTLSDKNIGIHTNSLPKNLLCRRILFKGKISKYSIFNDSLAKDHSSNRSMSIDGLIGKKRPHDISFQNMNSSMPSSTQKKTRILDEEIKDQSSSNENDRDSPVIVTLKPSYMPKTSRITEIIHKMKELNMNRIEDGLSFNKKRSEHDAKNVLLHTMEMEEDCEIEEDIAIDSPYLNTSLSEDDTESIVETDYSEEEKESISETESSSDDESYSLYDSF.

The disordered stretch occupies residues 190-233 (LNTSLSEDDTESIVETDYSEEEKESISETESSSDDESYSLYDSF). The segment covering 195-212 (SEDDTESIVETDYSEEEK) has biased composition (acidic residues).

It belongs to the asfivirus DP238L family.

This is an uncharacterized protein from Ornithodoros (relapsing fever ticks).